An 82-amino-acid chain; its full sequence is Penaeidin-3d (82 aa).

The N-terminal stretch at 1–19 (MRLVVCLVFLASFALVCQG) is a signal peptide. Glutamine 20 carries the post-translational modification Pyrrolidone carboxylic acid. 3 disulfides stabilise this stretch: cysteine 51–cysteine 66, cysteine 55–cysteine 73, and cysteine 67–cysteine 74. A Serine amide modification is found at serine 81.

Belongs to the penaeidin family.

It is found in the cytoplasmic granule. In terms of biological role, antibacterial and antifungal activity. Presents chitin-binding activity. In Penaeus vannamei (Whiteleg shrimp), this protein is Penaeidin-3d.